The following is a 409-amino-acid chain: Isovaleryl-CoA dehydrogenase, mitochondrial (409 aa).

A mitochondrion-targeting transit peptide spans 1 to 22; the sequence is MAAAQRWLPGILRRGDGLARRL. FAD is bound by residues 151-160 and 184-186; these read LAMSEPNSGS and WCT. Substrate is bound at residue Ser160. Substrate-binding positions include 206–207, Tyr261, and 268–271; these read SK and DLER. Glu270 (proton acceptor) is an active-site residue. FAD-binding positions include Arg296, Gln307, and 364-368; that span reads QCLGG. Position 391–392 (391–392) interacts with substrate; it reads AG. Residue 393 to 395 participates in FAD binding; the sequence is TSE.

This sequence belongs to the acyl-CoA dehydrogenase family. In terms of assembly, homodimer. It depends on FAD as a cofactor.

The protein localises to the mitochondrion. It carries out the reaction 3-methylbutanoyl-CoA + oxidized [electron-transfer flavoprotein] + H(+) = 3-methylbut-2-enoyl-CoA + reduced [electron-transfer flavoprotein]. It functions in the pathway amino-acid degradation; L-leucine degradation; (S)-3-hydroxy-3-methylglutaryl-CoA from 3-isovaleryl-CoA: step 1/3. The sequence is that of Isovaleryl-CoA dehydrogenase, mitochondrial from Oryza sativa subsp. japonica (Rice).